The following is a 279-amino-acid chain: Gas vesicle protein L2 (279 aa).

This sequence belongs to the gas vesicle GvpF/GvpL family. GvpF to GvpM interact with each other in vitro, and may form multi-subunit complex(es). Interacts with GvpC, GvpN and GvpO.

The protein localises to the gas vesicle. Functionally, proteins GvpF to GvpM might be involved in nucleating gas vesicle formation. A minor component of the gas vesicle. Gas vesicles are hollow, gas filled proteinaceous nanostructures found in several microbial planktonic microorganisms. They allow positioning of halobacteria at the optimal depth for growth in the poorly aerated, shallow brine pools of their habitat. Its function is as follows. Expression of 2 c-vac DNA fragments containing 2 divergently transcribed regions (gvpE-gvpF-gvpG-gvpH-gvpI-gvpJ-gvpK-gvpL-gvpM and gvpA-gvpC-gvpN-gvpO) allows H.volcanii to produce gas vesicles. This is Gas vesicle protein L2 from Halobacterium salinarum (strain ATCC 700922 / JCM 11081 / NRC-1) (Halobacterium halobium).